Consider the following 249-residue polypeptide: tRNA (guanine-N(1)-)-methyltransferase (249 aa).

S-adenosyl-L-methionine is bound by residues glycine 113 and 133–138 (IGDFVV).

Belongs to the RNA methyltransferase TrmD family. As to quaternary structure, homodimer.

It is found in the cytoplasm. It carries out the reaction guanosine(37) in tRNA + S-adenosyl-L-methionine = N(1)-methylguanosine(37) in tRNA + S-adenosyl-L-homocysteine + H(+). Functionally, specifically methylates guanosine-37 in various tRNAs. This is tRNA (guanine-N(1)-)-methyltransferase from Neisseria meningitidis serogroup C (strain 053442).